The sequence spans 257 residues: Small ribosomal subunit protein eS1 (257 aa).

Positions 236 to 257 (TSAEGEKIERPDDYEPPVQESV) are disordered. Residues 239 to 248 (EGEKIERPDD) are compositionally biased toward basic and acidic residues.

This sequence belongs to the eukaryotic ribosomal protein eS1 family. In terms of assembly, component of the small ribosomal subunit. Mature ribosomes consist of a small (40S) and a large (60S) subunit. The 40S subunit contains about 33 different proteins and 1 molecule of RNA (18S). The 60S subunit contains about 49 different proteins and 3 molecules of RNA (28S, 5.8S and 5S).

The protein resides in the cytoplasm. In Brugia malayi (Filarial nematode worm), this protein is Small ribosomal subunit protein eS1.